Consider the following 259-residue polypeptide: 4-hydroxy-tetrahydrodipicolinate reductase (259 aa).

Residues G8–M13, G93–T95, and A119–F122 each bind NAD(+). The Proton donor/acceptor role is filled by H149. H150 lines the (S)-2,3,4,5-tetrahydrodipicolinate pocket. Catalysis depends on K153, which acts as the Proton donor. G159–T160 serves as a coordination point for (S)-2,3,4,5-tetrahydrodipicolinate.

Belongs to the DapB family.

It localises to the cytoplasm. The catalysed reaction is (S)-2,3,4,5-tetrahydrodipicolinate + NAD(+) + H2O = (2S,4S)-4-hydroxy-2,3,4,5-tetrahydrodipicolinate + NADH + H(+). The enzyme catalyses (S)-2,3,4,5-tetrahydrodipicolinate + NADP(+) + H2O = (2S,4S)-4-hydroxy-2,3,4,5-tetrahydrodipicolinate + NADPH + H(+). Its pathway is amino-acid biosynthesis; L-lysine biosynthesis via DAP pathway; (S)-tetrahydrodipicolinate from L-aspartate: step 4/4. In terms of biological role, catalyzes the conversion of 4-hydroxy-tetrahydrodipicolinate (HTPA) to tetrahydrodipicolinate. This Enterococcus faecalis (strain ATCC 700802 / V583) protein is 4-hydroxy-tetrahydrodipicolinate reductase.